The primary structure comprises 133 residues: Ribosome-binding factor A (133 aa).

The protein belongs to the RbfA family. Monomer. Binds 30S ribosomal subunits, but not 50S ribosomal subunits or 70S ribosomes.

It is found in the cytoplasm. One of several proteins that assist in the late maturation steps of the functional core of the 30S ribosomal subunit. Associates with free 30S ribosomal subunits (but not with 30S subunits that are part of 70S ribosomes or polysomes). Required for efficient processing of 16S rRNA. May interact with the 5'-terminal helix region of 16S rRNA. This is Ribosome-binding factor A from Bordetella parapertussis (strain 12822 / ATCC BAA-587 / NCTC 13253).